A 181-amino-acid chain; its full sequence is Cyclic AMP-dependent transcription factor ATF-3 (181 aa).

Residues 76–96 (VTKSEVAPEEDERKRRRRERN) are disordered. Residue K78 forms a Glycyl lysine isopeptide (Lys-Gly) (interchain with G-Cter in SUMO2) linkage. The region spanning 86-149 (DERKRRRRER…QHLIYMLNLH (64 aa)) is the bZIP domain. A basic motif region spans residues 88 to 110 (RKRRRRERNKIAAAKCRNKKKEK). The leucine-zipper stretch occupies residues 114-142 (LQKESEKLESVNAELKAQIEELKNEKQHL). T162 bears the Phosphothreonine mark. Residue K175 forms a Glycyl lysine isopeptide (Lys-Gly) (interchain with G-Cter in SUMO2) linkage.

It belongs to the bZIP family. ATF subfamily. As to quaternary structure, ATF3 alone can bind DNA, but it preferentially forms heteromeric complexes with JUN and JUNB and does not interact with FOS. As to expression, expressed in tissues containing skeletal muscle or smooth muscle. Expressed in cutaneous and muscular sensory neurons.

It localises to the nucleus. Functionally, this protein binds the cAMP response element (CRE) (consensus: 5'-GTGACGT[AC][AG]-3'), a sequence present in many viral and cellular promoters. Represses transcription from promoters with ATF sites. It may repress transcription by stabilizing the binding of inhibitory cofactors at the promoter. This Rattus norvegicus (Rat) protein is Cyclic AMP-dependent transcription factor ATF-3 (Atf3).